The sequence spans 239 residues: Probable 2-phosphosulfolactate phosphatase (239 aa).

The protein belongs to the ComB family. It depends on Mg(2+) as a cofactor.

It catalyses the reaction (2R)-O-phospho-3-sulfolactate + H2O = (2R)-3-sulfolactate + phosphate. The chain is Probable 2-phosphosulfolactate phosphatase from Clostridium botulinum (strain 657 / Type Ba4).